A 602-amino-acid chain; its full sequence is Myotubularin (602 aa).

The disordered stretch occupies residues 1-32 (MASNSTPKYNSNSLENSLRRSPGDGMNHEQND). Residues 17 to 31 (SLRRSPGDGMNHEQN) show a composition bias toward basic and acidic residues. In terms of domain architecture, GRAM spans 28 to 96 (HEQNDEIPCL…GVIARIEKMG (69 aa)). Residues 162–537 (GWAVYDAMTE…RHLELWVNYY (376 aa)) enclose the Myotubularin phosphatase domain. A 1,2-diacyl-sn-glycero-3-phospho-(1D-myo-inositol-3,5-bisphosphate) is bound by residues Asn287, Asn312, and Ile313. Residues Asn287, Asn312, and Ile313 each contribute to the a 1,2-diacyl-sn-glycero-3-phospho-(1D-myo-inositol-3-phosphate) site. Cys374 functions as the Phosphocysteine intermediate in the catalytic mechanism. Residues Ser375, Asp376, Gly377, Trp378, Asp379, Arg380, Lys416, and Arg420 each coordinate a 1,2-diacyl-sn-glycero-3-phospho-(1D-myo-inositol-3,5-bisphosphate). Positions 375, 376, 377, 378, 379, and 380 each coordinate a 1,2-diacyl-sn-glycero-3-phospho-(1D-myo-inositol-3-phosphate). Arg420 is an a 1,2-diacyl-sn-glycero-3-phospho-(1D-myo-inositol-3-phosphate) binding site. Residues 574–602 (QITNSPKMNSSTTSPSSPSQIMPQVHTPF) form a disordered region. Low complexity predominate over residues 583 to 592 (SSTTSPSSPS).

It belongs to the protein-tyrosine phosphatase family. Non-receptor class myotubularin subfamily.

The protein localises to the cytoplasm. It localises to the cell membrane. It is found in the cell projection. Its subcellular location is the filopodium. The protein resides in the ruffle. The protein localises to the late endosome. It localises to the myofibril. It is found in the sarcomere. It catalyses the reaction a 1,2-diacyl-sn-glycero-3-phospho-(1D-myo-inositol-3-phosphate) + H2O = a 1,2-diacyl-sn-glycero-3-phospho-(1D-myo-inositol) + phosphate. The enzyme catalyses a 1,2-diacyl-sn-glycero-3-phospho-(1D-myo-inositol-3,5-bisphosphate) + H2O = a 1,2-diacyl-sn-glycero-3-phospho-(1D-myo-inositol-5-phosphate) + phosphate. The catalysed reaction is 1,2-dioctanoyl-sn-glycero-3-phospho-(1-D-myo-inositol-3-phosphate) + H2O = 1,2-dioctanoyl-sn-glycero-3-phospho-(1D-myo-inositol) + phosphate. It carries out the reaction 1,2-dioctanoyl-sn-glycero-3-phospho-(1D-myo-inositol-3,5-bisphosphate) + H2O = 1,2-dioctanoyl-sn-glycero-3-phospho-(1D-myo-inositol-5-phosphate) + phosphate. It catalyses the reaction 1,2-dihexadecanoyl-sn-glycero-3-phospho-(1D-myo-inositol-3,5-phosphate) + H2O = 1,2-dihexadecanoyl-sn-glycero-3-phospho-(1D-myo-inositol-5-phosphate) + phosphate. Lipid phosphatase which dephosphorylates phosphatidylinositol 3-monophosphate (PI3P) and phosphatidylinositol 3,5-bisphosphate (PI(3,5)P2). This Xenopus tropicalis (Western clawed frog) protein is Myotubularin (mtm1).